The primary structure comprises 929 residues: Isoleucine--tRNA ligase (929 aa).

The 'HIGH' region signature appears at 58–68 (PYANGDIHIGH). Glu563 is a binding site for L-isoleucyl-5'-AMP. The short motif at 605–609 (KMSKS) is the 'KMSKS' region element. Lys608 provides a ligand contact to ATP. Zn(2+) contacts are provided by Cys892, Cys895, Cys912, and Cys915.

It belongs to the class-I aminoacyl-tRNA synthetase family. IleS type 1 subfamily. Monomer. The cofactor is Zn(2+).

It is found in the cytoplasm. It carries out the reaction tRNA(Ile) + L-isoleucine + ATP = L-isoleucyl-tRNA(Ile) + AMP + diphosphate. In terms of biological role, catalyzes the attachment of isoleucine to tRNA(Ile). As IleRS can inadvertently accommodate and process structurally similar amino acids such as valine, to avoid such errors it has two additional distinct tRNA(Ile)-dependent editing activities. One activity is designated as 'pretransfer' editing and involves the hydrolysis of activated Val-AMP. The other activity is designated 'posttransfer' editing and involves deacylation of mischarged Val-tRNA(Ile). The sequence is that of Isoleucine--tRNA ligase from Neisseria meningitidis serogroup A / serotype 4A (strain DSM 15465 / Z2491).